Reading from the N-terminus, the 327-residue chain is MAAPVTKKPILLEFEKPLVELEERITQIRTLAADNQVDVSGQIQQLEARAIQLRREIFSNLSPAQRIQVARHPRRPSTLDYIQAISDEWIELHGDRNGSDDLALVGGVGALDGQPVVFLGHQKGRDTKDNVLRNFGMASPGGYRKALRLMEHADRFGMPILTFIDTPGAYAGVSAEELGQGEAIAVNLREMFRFSVPILCTVIGEGGSGGALGIGVGDRLLMFEHSVYTVASPEACASILWRDAGKAAQAAEALKITARDLKQLGILDEIITEPLGGAHSAPLETAQSLRQVLLRHLKDLQALSPAQLREQRYQKFRQLGVFLESSD.

The CoA carboxyltransferase C-terminal domain occupies 46 to 299 (LEARAIQLRR…RQVLLRHLKD (254 aa)).

Belongs to the AccA family. As to quaternary structure, acetyl-CoA carboxylase is a heterohexamer composed of biotin carboxyl carrier protein (AccB), biotin carboxylase (AccC) and two subunits each of ACCase subunit alpha (AccA) and ACCase subunit beta (AccD).

The protein resides in the cytoplasm. The catalysed reaction is N(6)-carboxybiotinyl-L-lysyl-[protein] + acetyl-CoA = N(6)-biotinyl-L-lysyl-[protein] + malonyl-CoA. The protein operates within lipid metabolism; malonyl-CoA biosynthesis; malonyl-CoA from acetyl-CoA: step 1/1. Component of the acetyl coenzyme A carboxylase (ACC) complex. First, biotin carboxylase catalyzes the carboxylation of biotin on its carrier protein (BCCP) and then the CO(2) group is transferred by the carboxyltransferase to acetyl-CoA to form malonyl-CoA. This Synechococcus elongatus (strain ATCC 33912 / PCC 7942 / FACHB-805) (Anacystis nidulans R2) protein is Acetyl-coenzyme A carboxylase carboxyl transferase subunit alpha.